Here is a 1075-residue protein sequence, read N- to C-terminus: Carbamoyl phosphate synthase large chain (1075 aa).

The carboxyphosphate synthetic domain stretch occupies residues 1–403; sequence MPKRTDINTI…SLQKALRGLE (403 aa). ATP is bound by residues Arg-129, Arg-169, Gly-175, Gly-176, Gln-208, Val-210, Glu-215, Gly-241, Val-242, His-243, Gln-285, and Glu-299. The 196-residue stretch at 133 to 328 folds into the ATP-grasp 1 domain; the sequence is KDAMTKIGLN…IAKVAAKLAV (196 aa). Mg(2+)-binding residues include Gln-285, Glu-299, and Asn-301. Gln-285, Glu-299, and Asn-301 together coordinate Mn(2+). Positions 404–548 are oligomerization domain; it reads IGICGFNLRS…YSTYEDECEA (145 aa). The tract at residues 549 to 930 is carbamoyl phosphate synthetic domain; the sequence is KPTTRQKVMI…AYYKAQLGAG (382 aa). Positions 673–864 constitute an ATP-grasp 2 domain; the sequence is QKILTDLGLK…LAKIAALVMA (192 aa). ATP-binding residues include Arg-709, His-748, Leu-750, Glu-755, Gly-780, Ile-781, His-782, Ser-783, Gln-823, and Glu-835. Residues Gln-823, Glu-835, and Asn-837 each coordinate Mg(2+). Mn(2+)-binding residues include Gln-823, Glu-835, and Asn-837. One can recognise an MGS-like domain in the interval 931–1070; sequence ERIPSTGKVF…QQLHLSSALA (140 aa). The tract at residues 931–1075 is allosteric domain; it reads ERIPSTGKVF…SSALANQITR (145 aa).

The protein belongs to the CarB family. Composed of two chains; the small (or glutamine) chain promotes the hydrolysis of glutamine to ammonia, which is used by the large (or ammonia) chain to synthesize carbamoyl phosphate. Tetramer of heterodimers (alpha,beta)4. Requires Mg(2+) as cofactor. The cofactor is Mn(2+).

The catalysed reaction is hydrogencarbonate + L-glutamine + 2 ATP + H2O = carbamoyl phosphate + L-glutamate + 2 ADP + phosphate + 2 H(+). It catalyses the reaction hydrogencarbonate + NH4(+) + 2 ATP = carbamoyl phosphate + 2 ADP + phosphate + 2 H(+). Its pathway is amino-acid biosynthesis; L-arginine biosynthesis; carbamoyl phosphate from bicarbonate: step 1/1. It participates in pyrimidine metabolism; UMP biosynthesis via de novo pathway; (S)-dihydroorotate from bicarbonate: step 1/3. Functionally, large subunit of the glutamine-dependent carbamoyl phosphate synthetase (CPSase). CPSase catalyzes the formation of carbamoyl phosphate from the ammonia moiety of glutamine, carbonate, and phosphate donated by ATP, constituting the first step of 2 biosynthetic pathways, one leading to arginine and/or urea and the other to pyrimidine nucleotides. The large subunit (synthetase) binds the substrates ammonia (free or transferred from glutamine from the small subunit), hydrogencarbonate and ATP and carries out an ATP-coupled ligase reaction, activating hydrogencarbonate by forming carboxy phosphate which reacts with ammonia to form carbamoyl phosphate. In Haemophilus ducreyi (strain 35000HP / ATCC 700724), this protein is Carbamoyl phosphate synthase large chain.